The following is a 286-amino-acid chain: Putative L-ribulose-5-phosphate 3-epimerase SgbU (286 aa).

The protein belongs to the L-ribulose-5-phosphate 3-epimerase family.

The catalysed reaction is L-ribulose 5-phosphate = L-xylulose 5-phosphate. Functionally, catalyzes the isomerization of L-xylulose-5-phosphate to L-ribulose-5-phosphate. This is Putative L-ribulose-5-phosphate 3-epimerase SgbU (sgbU) from Haemophilus influenzae (strain ATCC 51907 / DSM 11121 / KW20 / Rd).